Here is a 107-residue protein sequence, read N- to C-terminus: Small ribosomal subunit protein bS16m (107 aa).

This sequence belongs to the bacterial ribosomal protein bS16 family. In terms of assembly, component of the mitochondrial small ribosomal subunit (mt-SSU). Mature N.crassa 74S mitochondrial ribosomes consist of a small (37S) and a large (54S) subunit. The 37S small subunit contains a 16S ribosomal RNA (16S mt-rRNA) and 32 different proteins. The 54S large subunit contains a 23S rRNA (23S mt-rRNA) and 42 different proteins.

The protein resides in the mitochondrion. In terms of biological role, component of the mitochondrial ribosome (mitoribosome), a dedicated translation machinery responsible for the synthesis of mitochondrial genome-encoded proteins, including at least some of the essential transmembrane subunits of the mitochondrial respiratory chain. The mitoribosomes are attached to the mitochondrial inner membrane and translation products are cotranslationally integrated into the membrane. This chain is Small ribosomal subunit protein bS16m (cyt-21), found in Neurospora crassa (strain ATCC 24698 / 74-OR23-1A / CBS 708.71 / DSM 1257 / FGSC 987).